The following is a 192-amino-acid chain: Glycerol-3-phosphate acyltransferase (192 aa).

5 helical membrane passes run 4–24 (FAII…DVVI), 48–68 (LVLV…WVGY), 74–94 (YFEL…PIFF), 101–121 (GVAT…GSML), and 125–145 (LLIF…ALIL).

It belongs to the PlsY family. Probably interacts with PlsX.

The protein localises to the cell inner membrane. It carries out the reaction an acyl phosphate + sn-glycerol 3-phosphate = a 1-acyl-sn-glycero-3-phosphate + phosphate. It participates in lipid metabolism; phospholipid metabolism. Catalyzes the transfer of an acyl group from acyl-phosphate (acyl-PO(4)) to glycerol-3-phosphate (G3P) to form lysophosphatidic acid (LPA). This enzyme utilizes acyl-phosphate as fatty acyl donor, but not acyl-CoA or acyl-ACP. The polypeptide is Glycerol-3-phosphate acyltransferase (Histophilus somni (strain 129Pt) (Haemophilus somnus)).